The following is a 217-amino-acid chain: Thiopurine S-methyltransferase (217 aa).

Residues Trp-11, Leu-46, Glu-67, and Arg-122 each coordinate S-adenosyl-L-methionine.

The protein belongs to the class I-like SAM-binding methyltransferase superfamily. TPMT family.

It localises to the cytoplasm. It catalyses the reaction S-adenosyl-L-methionine + a thiopurine = S-adenosyl-L-homocysteine + a thiopurine S-methylether.. This is Thiopurine S-methyltransferase from Vibrio vulnificus (strain YJ016).